An 85-amino-acid polypeptide reads, in one-letter code: UPF0291 protein SAK_0343 (85 aa).

The tract at residues 58–85 is disordered; that stretch reads GNDVTPEKLRQVQREKGLHGRSLDDPNS. The span at 62–85 shows a compositional bias: basic and acidic residues; the sequence is TPEKLRQVQREKGLHGRSLDDPNS.

It belongs to the UPF0291 family.

The protein resides in the cytoplasm. The polypeptide is UPF0291 protein SAK_0343 (Streptococcus agalactiae serotype Ia (strain ATCC 27591 / A909 / CDC SS700)).